The primary structure comprises 980 residues: GPI inositol-deacylase (980 aa).

Residues 1 to 7 (MFMFRNC) are Cytoplasmic-facing. The helical transmembrane segment at 8–28 (AVLLVIGSICCFIYGLFRLHV) threads the bilayer. Topologically, residues 29-628 (EVEPNACRMT…EYSYSSALSR (600 aa)) are lumenal. S170 is an active-site residue. Residues N427, N517, and N596 are each glycosylated (N-linked (GlcNAc...) asparagine). A helical membrane pass occupies residues 629–649 (LVLEFYGWLPAHLVCVLLIVL). Over 650–709 (RKQVETFYDVGTFRSLRPYVGYLQYTSLYIVTACRLLKKLIISSRVFPEPEPLDYSINVS) the chain is Cytoplasmic. A helical transmembrane segment spans residues 710 to 730 (IVIHCAAIALSLLATLGTWLA). Topologically, residues 731–774 (LTLYGNAFYRLALRITRLSQATSNVMISIMTHLPITYGILTIAT) are lumenal. The helical transmembrane segment at 775–795 (AMGTCSGVGLLLAFVFYFLML) threads the bilayer. The Cytoplasmic segment spans residues 796-867 (SNAYKDYLED…CVGLQNFSFH (72 aa)). The disordered stretch occupies residues 821-853 (AVTEQEDATEEQNEEQNALKQNDEQKQQQQEEE). The segment covering 824 to 834 (EQEDATEEQNE) has biased composition (acidic residues). A helical membrane pass occupies residues 868–888 (VTLLLMLFVQLLLNAPSSLAW). Residues 889–895 (LRSRRHG) lie on the Lumenal side of the membrane. The helical transmembrane segment at 896-916 (INLPDPSLYPSIVVLASLSLL) threads the bilayer. The Cytoplasmic portion of the chain corresponds to 917–929 (LQLRAPQKCQGYW). The helical transmembrane segment at 930–950 (MLSIAFYILAGVVLLYCQAAI) threads the bilayer. Residues 951–954 (YRLT) lie on the Lumenal side of the membrane. Residues 955-975 (YVIAGAFALLSAHQSLWILWG) traverse the membrane as a helical segment. Residues 976-980 (RVSRV) lie on the Cytoplasmic side of the membrane.

It belongs to the GPI inositol-deacylase family.

It localises to the endoplasmic reticulum membrane. In terms of biological role, involved in inositol deacylation of GPI-anchored proteins. The sequence is that of GPI inositol-deacylase from Drosophila melanogaster (Fruit fly).